The following is a 457-amino-acid chain: UDP-N-acetylglucosamine 1-carboxyvinyltransferase (457 aa).

A phosphoenolpyruvate-binding site is contributed by 34 to 35 (KN). Arg-104 contributes to the UDP-N-acetyl-alpha-D-glucosamine binding site. Cys-128 functions as the Proton donor in the catalytic mechanism. Residue Cys-128 is modified to 2-(S-cysteinyl)pyruvic acid O-phosphothioketal. UDP-N-acetyl-alpha-D-glucosamine is bound by residues Asp-319 and Ile-341. The disordered stretch occupies residues 436–457 (INKSKNRSSNSKLKEVSEIRAA). Over residues 447–457 (KLKEVSEIRAA) the composition is skewed to basic and acidic residues.

The protein belongs to the EPSP synthase family. MurA subfamily.

The protein resides in the cytoplasm. The enzyme catalyses phosphoenolpyruvate + UDP-N-acetyl-alpha-D-glucosamine = UDP-N-acetyl-3-O-(1-carboxyvinyl)-alpha-D-glucosamine + phosphate. Its pathway is cell wall biogenesis; peptidoglycan biosynthesis. In terms of biological role, cell wall formation. Adds enolpyruvyl to UDP-N-acetylglucosamine. This chain is UDP-N-acetylglucosamine 1-carboxyvinyltransferase, found in Prochlorococcus marinus subsp. pastoris (strain CCMP1986 / NIES-2087 / MED4).